The chain runs to 462 residues: MTKNHKLWGGRFESSLEKWVEEFGASISFDQKLAPYDMKASMAHVTMLGKTDIISQEEAGLIKDGLKILQDKYRAGQLTFSISNEDIHMNIESLLTAEIGEVAGKLHTARSRNDQVATDMHLYLKDKLQEMMKKLLHLRITLVNLAENHIYTVMPGYTHLQHAQPISFGHHLMAYYNMFTRDTERLEFNMKHTNLSPLGAAALAGTTFPIDRHMTTRLLDFEKPYSNSLDAVSDRDFIIEFLSNASILMMHLSRFCEEIINWCSYEYQFITLSDTFSTGSSIMPQKKNPDMAELIRGKTGRVYGNLFSLLTVMKSLPLAYNKDLQEDKEGMFDSVETVSIAIEIMANMLETMTVNEHIMMTSTETDFSNATELADYLASKGIPFRKAHEIVGKLVLECSKNGSYLQDIPLKYYQEISELIENDIYEILTAKTAVKRRNSLGGTGFDQVKKQILLARKELKAE.

Belongs to the lyase 1 family. Argininosuccinate lyase subfamily.

The protein resides in the cytoplasm. It carries out the reaction 2-(N(omega)-L-arginino)succinate = fumarate + L-arginine. The protein operates within amino-acid biosynthesis; L-arginine biosynthesis; L-arginine from L-ornithine and carbamoyl phosphate: step 3/3. The sequence is that of Argininosuccinate lyase from Streptococcus agalactiae serotype Ia (strain ATCC 27591 / A909 / CDC SS700).